The following is a 427-amino-acid chain: MESLTLQPIARVDGAINLPGSKSVSNRALLLAALACGKTVLTNLLDSDDVRHMLNALSALGINYTLSADRTRCDITGNGGALRAPGALELFLGNAGTAMRPLAAALCLGQNEIVLTGEPRMKERPIGHLVDSLRQGGANIDYLEQENYPPLRLRGGFTGGDIEVDGSVSSQFLTALLMTAPLAPEDTIIRVKGELVSKPYIDITLNLMKTFGVEIANHHYQQFVVKGGQQYHSPGRYLVEGDASSASYFLAAGAIKGGTVKVTGIGRKSMQGDIRFADVLEKMGATITWGDDFIACTRGELHAIDMDMNHIPDAAMTIATTALFAKGTTTLRNIYNWRVKETDRLFAMATELRKVGAEVEEGHDYIRITPPAKLQHADIGTYNDHRMAMCFSLVALSDTPVTILDPKCTAKTFPDYFEQLARMSTPA.

Residues lysine 22, serine 23, and arginine 27 each coordinate 3-phosphoshikimate. Lysine 22 serves as a coordination point for phosphoenolpyruvate. Phosphoenolpyruvate is bound by residues glycine 96 and arginine 124. 3-phosphoshikimate is bound by residues serine 169, serine 170, glutamine 171, serine 197, aspartate 313, asparagine 336, and lysine 340. Glutamine 171 provides a ligand contact to phosphoenolpyruvate. Catalysis depends on aspartate 313, which acts as the Proton acceptor. Residues arginine 344, arginine 386, and lysine 411 each coordinate phosphoenolpyruvate.

This sequence belongs to the EPSP synthase family. In terms of assembly, monomer.

The protein resides in the cytoplasm. The catalysed reaction is 3-phosphoshikimate + phosphoenolpyruvate = 5-O-(1-carboxyvinyl)-3-phosphoshikimate + phosphate. It functions in the pathway metabolic intermediate biosynthesis; chorismate biosynthesis; chorismate from D-erythrose 4-phosphate and phosphoenolpyruvate: step 6/7. Catalyzes the transfer of the enolpyruvyl moiety of phosphoenolpyruvate (PEP) to the 5-hydroxyl of shikimate-3-phosphate (S3P) to produce enolpyruvyl shikimate-3-phosphate and inorganic phosphate. The polypeptide is 3-phosphoshikimate 1-carboxyvinyltransferase (Salmonella newport (strain SL254)).